We begin with the raw amino-acid sequence, 603 residues long: Isocitrate dehydrogenase kinase/phosphatase (603 aa).

ATP is bound by residues 327–333 (APGIKGL) and K348. The active site involves D383.

It belongs to the AceK family.

It is found in the cytoplasm. The enzyme catalyses L-seryl-[isocitrate dehydrogenase] + ATP = O-phospho-L-seryl-[isocitrate dehydrogenase] + ADP + H(+). In terms of biological role, bifunctional enzyme which can phosphorylate or dephosphorylate isocitrate dehydrogenase (IDH) on a specific serine residue. This is a regulatory mechanism which enables bacteria to bypass the Krebs cycle via the glyoxylate shunt in response to the source of carbon. When bacteria are grown on glucose, IDH is fully active and unphosphorylated, but when grown on acetate or ethanol, the activity of IDH declines drastically concomitant with its phosphorylation. The protein is Isocitrate dehydrogenase kinase/phosphatase of Burkholderia thailandensis (strain ATCC 700388 / DSM 13276 / CCUG 48851 / CIP 106301 / E264).